The sequence spans 254 residues: Imidazole glycerol phosphate synthase subunit HisF (254 aa).

Catalysis depends on residues Asp-12 and Asp-131.

It belongs to the HisA/HisF family. As to quaternary structure, heterodimer of HisH and HisF.

The protein resides in the cytoplasm. The enzyme catalyses 5-[(5-phospho-1-deoxy-D-ribulos-1-ylimino)methylamino]-1-(5-phospho-beta-D-ribosyl)imidazole-4-carboxamide + L-glutamine = D-erythro-1-(imidazol-4-yl)glycerol 3-phosphate + 5-amino-1-(5-phospho-beta-D-ribosyl)imidazole-4-carboxamide + L-glutamate + H(+). Its pathway is amino-acid biosynthesis; L-histidine biosynthesis; L-histidine from 5-phospho-alpha-D-ribose 1-diphosphate: step 5/9. In terms of biological role, IGPS catalyzes the conversion of PRFAR and glutamine to IGP, AICAR and glutamate. The HisF subunit catalyzes the cyclization activity that produces IGP and AICAR from PRFAR using the ammonia provided by the HisH subunit. In Rhizorhabdus wittichii (strain DSM 6014 / CCUG 31198 / JCM 15750 / NBRC 105917 / EY 4224 / RW1) (Sphingomonas wittichii), this protein is Imidazole glycerol phosphate synthase subunit HisF.